The primary structure comprises 517 residues: MDDPKIMNIMNGMKSLEDHCQLISDVKDESPMQMFYKDKGVFLTGGTGFFGKIIIEKLLRVTEVGQIYLLIRTKKGKDAFARIEDLFNDPVFAKMKQVNPKYRCQITIISGDCSLPGLGISADERETIMENVNIVLHSAATVRFDEKLKMAIAINVHGTKEIIKLAKEIVNLKALVHVSTAFAHCNMRHIQERFYSGTMSGENAFKLSECLDEHTLNTLTPTIIKGYPNTYTFTKVLAENVVQQSAQNLPVTIFRPGIVITTYREPVTGWIDNMYGPCGVIVGIGSGVLRVFTGDMDNKAHIVPVDMCVNALLASAWDIARNKYETPPIYNYVPDAENMVTWRRYMEDGFEYGCDIPMRKSIWYPRFTIVPHMWQYHILCFLYHTLPALVMDAIMVIIGKKPRMMKIYRKIHKLSNVLKYFSSNEFRFDNDNVRKLTEKLDDRDKRLFAFDMRDLDWTNLFRVSLYGLRLYVVKDDPSNIPESIKRYERLKVLHYTTLAVFYALAAWALYALLKLFL.

The next 2 membrane-spanning stretches (helical) occupy residues 378–398 (ILCF…MVII) and 492–512 (VLHY…LYAL).

This sequence belongs to the fatty acyl-CoA reductase family.

It localises to the apical cell membrane. The catalysed reaction is a long-chain fatty acyl-CoA + 2 NADPH + 2 H(+) = a long-chain primary fatty alcohol + 2 NADP(+) + CoA. Functionally, catalyzes the reduction of saturated fatty acyl-CoA to fatty alcohols. The preferred substrates are C24:0 and C26:0. Necessary for the final stages of tracheal maturation, to facilitate the transition from water-filled to gas-filled tubes. May help to maintain the integrity of the outer hydrophobic envelope of the trachea. This is Fatty acyl-CoA reductase wat from Drosophila melanogaster (Fruit fly).